Reading from the N-terminus, the 119-residue chain is Phosphoribosyl-AMP cyclohydrolase (119 aa).

Residue aspartate 77 coordinates Mg(2+). Cysteine 78 contributes to the Zn(2+) binding site. Mg(2+) contacts are provided by aspartate 79 and aspartate 81. Zn(2+) is bound by residues cysteine 94 and cysteine 101.

The protein belongs to the PRA-CH family. In terms of assembly, homodimer. Requires Mg(2+) as cofactor. It depends on Zn(2+) as a cofactor.

The protein resides in the cytoplasm. It carries out the reaction 1-(5-phospho-beta-D-ribosyl)-5'-AMP + H2O = 1-(5-phospho-beta-D-ribosyl)-5-[(5-phospho-beta-D-ribosylamino)methylideneamino]imidazole-4-carboxamide. The protein operates within amino-acid biosynthesis; L-histidine biosynthesis; L-histidine from 5-phospho-alpha-D-ribose 1-diphosphate: step 3/9. Catalyzes the hydrolysis of the adenine ring of phosphoribosyl-AMP. The sequence is that of Phosphoribosyl-AMP cyclohydrolase from Dinoroseobacter shibae (strain DSM 16493 / NCIMB 14021 / DFL 12).